The primary structure comprises 381 residues: Zinc finger CCCH domain-containing protein 61 (381 aa).

Residues 1 to 39 (MDVEHHKSGHISRPTVDIPPRKLLSSAKSPSSVSSPLRD) form a disordered region. A compositionally biased stretch (low complexity) spans 21 to 37 (RKLLSSAKSPSSVSSPL). C3H1-type zinc fingers lie at residues 101–128 (YTGE…HGVF) and 137–159 (YRTE…AHSP).

As to quaternary structure, interacts with MARD1/FLZ9 and RD21A via its CCCH zing finger domains.

The protein localises to the cytoplasm. Its subcellular location is the stress granule. It localises to the P-body. In Arabidopsis thaliana (Mouse-ear cress), this protein is Zinc finger CCCH domain-containing protein 61.